The primary structure comprises 640 residues: Protein argonaute (640 aa).

The N-terminal domain stretch occupies residues 1–100 (MYLNLYEIKI…YIKKKFIDNN (100 aa)). Residues 101–153 (FYYKRGNNYISINDKFPLDSNTNVNAHLTYKIKLYKINERYYISVLPKFTFLS) are linker L1. Residues 154–209 (DKPALESPIKSTYLFNIKSGKTFPYISGLNGVLKIDLGENGIKEVLFPENYYFNFT) are PAZ domain. The linker L2 stretch occupies residues 210–291 (SKEAEKFGFS…KYSFYKNDQK (82 aa)). Residues 292–423 (IKIAFFFSSK…YVYKMGNFIP (132 aa)) are mid domain. The tract at residues 424 to 640 (ECQPYVIRNL…EWKLYIPYMK (217 aa)) is PIWI domain. Active-site residues include Asp-445, Glu-481, Asp-515, and Asn-623. Asp-445 is a binding site for Mn(2+). The Mn(2+) site is built by Asp-515 and Asn-623.

The protein belongs to the argonaute family. Long pAgo subfamily. The cofactor is Mn(2+).

Functionally, a highly versatile argonaute that uses 5'-phospho- and 5'-OH- guide RNA (gRNA) or DNA (gDNA) to cleave target RNA or ssDNA (tDNA) in all possible combinations; has no detectable activity in the absence of guide. Uses short guide sequences (18-21 nucleotides (nt) on average) to bind complementary target nucleic acids resulting in target cleavage in a site-specific manner. Using 5'-phospho-gRNA or 5'-OH-gRNA the cleavage site is 10 nt downstream of the target residue base-paired with the 5'-end of the gRNA, using 5'-phospho-gDNA the cleavage site is 11 nucleotides (nt) downstream, while with 5'-OH-gDNA the cleavage site is 9 nt downstream. The polypeptide is Protein argonaute (Marinitoga hydrogenitolerans (strain DSM 16785 / JCM 12826 / AT1271)).